A 424-amino-acid polypeptide reads, in one-letter code: Phosphoribosylamine--glycine ligase (424 aa).

Positions 107-313 (KTFMKKYGIP…FLETLLNFYE (207 aa)) constitute an ATP-grasp domain. 133–194 (VEKVGAPIVV…EEFLEGEEAS (62 aa)) contacts ATP. Residues Glu-283 and Asn-285 each contribute to the Mg(2+) site.

This sequence belongs to the GARS family. Mg(2+) is required as a cofactor. Requires Mn(2+) as cofactor.

The enzyme catalyses 5-phospho-beta-D-ribosylamine + glycine + ATP = N(1)-(5-phospho-beta-D-ribosyl)glycinamide + ADP + phosphate + H(+). Its pathway is purine metabolism; IMP biosynthesis via de novo pathway; N(1)-(5-phospho-D-ribosyl)glycinamide from 5-phospho-alpha-D-ribose 1-diphosphate: step 2/2. The polypeptide is Phosphoribosylamine--glycine ligase (Aquifex aeolicus (strain VF5)).